We begin with the raw amino-acid sequence, 503 residues long: uncharacterized protein (503 aa).

12 helical membrane passes run 20 to 40 (FIAFAFNYVAGFGFISVVLTM), 43 to 63 (LGPFSYLILGLAALGILGVML), 106 to 126 (VSLTGPFNGLIVPAVLVLSFA), 138 to 158 (LIGLLVGGFVLFGALNFISLF), 166 to 186 (AILFFAIVKWVVVLGGLILGI), 215 to 235 (VISTTVGMLVAFAGTEDLTAI), 249 to 269 (LLMFGAVTLLYLIGFVIISGI), 301 to 321 (YLGIPLLVIFGLGFLLNSLAS), 359 to 379 (VWASNIMTLAVMVLMIIVPFL), 405 to 425 (LAVLISLIQYFITYIFFFMIL), 443 to 463 (GVSFAIITVLLFVNLFPITAW), and 468 to 488 (TFKLSILAAFFALGIGFFIHS).

The protein to M.genitalium MG225.

The protein resides in the cell membrane. This is an uncharacterized protein from Mycoplasma pneumoniae (strain ATCC 29342 / M129 / Subtype 1) (Mycoplasmoides pneumoniae).